A 137-amino-acid polypeptide reads, in one-letter code: Large ribosomal subunit protein bL17 (137 aa).

It belongs to the bacterial ribosomal protein bL17 family. Part of the 50S ribosomal subunit. Contacts protein L32.

The sequence is that of Large ribosomal subunit protein bL17 from Bradyrhizobium sp. (strain BTAi1 / ATCC BAA-1182).